Here is a 945-residue protein sequence, read N- to C-terminus: Bifunctional glutamine synthetase adenylyltransferase/adenylyl-removing enzyme (945 aa).

The tract at residues 1–441 is adenylyl removase; sequence MLPLSAALQT…VFNDLIGDDS (441 aa). Residues 450-945 are adenylyl transferase; the sequence is YQHYHSLWQD…VRASWAKWLG (496 aa).

It belongs to the GlnE family. Requires Mg(2+) as cofactor.

It catalyses the reaction [glutamine synthetase]-O(4)-(5'-adenylyl)-L-tyrosine + phosphate = [glutamine synthetase]-L-tyrosine + ADP. The catalysed reaction is [glutamine synthetase]-L-tyrosine + ATP = [glutamine synthetase]-O(4)-(5'-adenylyl)-L-tyrosine + diphosphate. Functionally, involved in the regulation of glutamine synthetase GlnA, a key enzyme in the process to assimilate ammonia. When cellular nitrogen levels are high, the C-terminal adenylyl transferase (AT) inactivates GlnA by covalent transfer of an adenylyl group from ATP to specific tyrosine residue of GlnA, thus reducing its activity. Conversely, when nitrogen levels are low, the N-terminal adenylyl removase (AR) activates GlnA by removing the adenylyl group by phosphorolysis, increasing its activity. The regulatory region of GlnE binds the signal transduction protein PII (GlnB) which indicates the nitrogen status of the cell. The chain is Bifunctional glutamine synthetase adenylyltransferase/adenylyl-removing enzyme from Serratia proteamaculans (strain 568).